We begin with the raw amino-acid sequence, 132 residues long: ATP synthase epsilon chain (132 aa).

The protein belongs to the ATPase epsilon chain family. As to quaternary structure, F-type ATPases have 2 components, CF(1) - the catalytic core - and CF(0) - the membrane proton channel. CF(1) has five subunits: alpha(3), beta(3), gamma(1), delta(1), epsilon(1). CF(0) has three main subunits: a, b and c.

The protein resides in the cell inner membrane. Its function is as follows. Produces ATP from ADP in the presence of a proton gradient across the membrane. This chain is ATP synthase epsilon chain, found in Anaeromyxobacter sp. (strain Fw109-5).